Reading from the N-terminus, the 129-residue chain is uncharacterized protein (129 aa).

The signal sequence occupies residues 1–27; that stretch reads MLMRKKKLLSRISFGSLFLLCGTILSA. Cys-28 carries the N-palmitoyl cysteine lipid modification. Cys-28 is lipidated: S-diacylglycerol cysteine.

It belongs to the MG439/MG440 family.

Its subcellular location is the cell membrane. This is an uncharacterized protein from Mycoplasma pneumoniae (strain ATCC 29342 / M129 / Subtype 1) (Mycoplasmoides pneumoniae).